The following is a 362-amino-acid chain: UDP-N-acetylglucosamine--N-acetylmuramyl-(pentapeptide) pyrophosphoryl-undecaprenol N-acetylglucosamine transferase (362 aa).

UDP-N-acetyl-alpha-D-glucosamine is bound by residues 14-16 (TGG), R170, S199, and Q289.

The protein belongs to the glycosyltransferase 28 family. MurG subfamily.

Its subcellular location is the cell inner membrane. The enzyme catalyses di-trans,octa-cis-undecaprenyl diphospho-N-acetyl-alpha-D-muramoyl-L-alanyl-D-glutamyl-meso-2,6-diaminopimeloyl-D-alanyl-D-alanine + UDP-N-acetyl-alpha-D-glucosamine = di-trans,octa-cis-undecaprenyl diphospho-[N-acetyl-alpha-D-glucosaminyl-(1-&gt;4)]-N-acetyl-alpha-D-muramoyl-L-alanyl-D-glutamyl-meso-2,6-diaminopimeloyl-D-alanyl-D-alanine + UDP + H(+). The protein operates within cell wall biogenesis; peptidoglycan biosynthesis. Its function is as follows. Cell wall formation. Catalyzes the transfer of a GlcNAc subunit on undecaprenyl-pyrophosphoryl-MurNAc-pentapeptide (lipid intermediate I) to form undecaprenyl-pyrophosphoryl-MurNAc-(pentapeptide)GlcNAc (lipid intermediate II). The protein is UDP-N-acetylglucosamine--N-acetylmuramyl-(pentapeptide) pyrophosphoryl-undecaprenol N-acetylglucosamine transferase of Borrelia hermsii (strain HS1 / DAH).